A 183-amino-acid chain; its full sequence is U3 small nucleolar ribonucleoprotein protein imp3 (183 aa).

Positions 108–174 (RRLPVVMRNI…IKKHVMDYNN (67 aa)) constitute an S4 RNA-binding domain.

It belongs to the universal ribosomal protein uS4 family. As to quaternary structure, component of a heterotrimeric complex containing imp3, imp4 and mpp10.

It is found in the nucleus. It localises to the nucleolus. In terms of biological role, component of the U3 small nucleolar ribonucleoprotein. Required for the early cleavages at sites A0, A1 and A2 during 18S ribosomal pre-RNA processing. In Caenorhabditis elegans, this protein is U3 small nucleolar ribonucleoprotein protein imp3.